An 80-amino-acid polypeptide reads, in one-letter code: Putative membrane protein insertion efficiency factor (80 aa).

The segment at 61–80 is disordered; sequence KTGKDPIPDHFSLKRNQEGE. Residues 62-80 are compositionally biased toward basic and acidic residues; that stretch reads TGKDPIPDHFSLKRNQEGE.

The protein belongs to the UPF0161 family.

Its subcellular location is the cell membrane. Could be involved in insertion of integral membrane proteins into the membrane. The protein is Putative membrane protein insertion efficiency factor of Streptococcus pneumoniae (strain CGSP14).